Consider the following 159-residue polypeptide: Ribosomal RNA large subunit methyltransferase H (159 aa).

S-adenosyl-L-methionine is bound by residues leucine 76, glycine 108, and 127–132; that span reads FSKMTF.

Belongs to the RNA methyltransferase RlmH family. As to quaternary structure, homodimer.

It localises to the cytoplasm. It catalyses the reaction pseudouridine(1915) in 23S rRNA + S-adenosyl-L-methionine = N(3)-methylpseudouridine(1915) in 23S rRNA + S-adenosyl-L-homocysteine + H(+). Functionally, specifically methylates the pseudouridine at position 1915 (m3Psi1915) in 23S rRNA. This Geobacillus thermodenitrificans (strain NG80-2) protein is Ribosomal RNA large subunit methyltransferase H.